The chain runs to 585 residues: Protein DENND6B (585 aa).

Residues 1–10 are compositionally biased toward low complexity; the sequence is MEVPVGPGPR. The tract at residues 1–25 is disordered; it reads MEVPVGPGPRQAGGGLGATRSSSSG. One can recognise a uDENN domain in the interval 43-221; the sequence is ECVCVVTFDL…IQVRIPSRVD (179 aa). The cDENN domain maps to 246 to 373; that stretch reads VHELDLFRCF…VKLKKPSRLK (128 aa). The dDENN domain occupies 375–499; that stretch reads LDTKPGLYTS…KSPHFDGWYR (125 aa).

This sequence belongs to the DENND6 family.

The protein localises to the recycling endosome. It localises to the cytoplasm. Its function is as follows. Guanine nucleotide exchange factor (GEF) for RAB14. Also has some, lesser GEF activity towards RAB35. This chain is Protein DENND6B (Dennd6b), found in Mus musculus (Mouse).